Here is a 226-residue protein sequence, read N- to C-terminus: PDGF-related-transforming protein sis (226 aa).

Basic residues predominate over residues 201–215 (RRPPKGKHRKCKHTH). The interval 201–226 (RRPPKGKHRKCKHTHDKTALKETLGA) is disordered.

It belongs to the PDGF/VEGF growth factor family.

The protein is PDGF-related-transforming protein sis (V-SIS) of Woolly monkey sarcoma virus (WMSV).